Reading from the N-terminus, the 528-residue chain is Dihydromonacolin L monooxygenase LovA (528 aa).

The Cytoplasmic segment spans residues 1–23; it reads MTVDALTQPHHLLSLAWNDTQQH. Residues 24 to 44 traverse the membrane as a helical; Signal-anchor for type II membrane protein segment; it reads GSWFAPLVTTSAGLLCLLLYL. Topologically, residues 45-528 are lumenal; the sequence is CSSGRRSDLP…DEDIRLPGSL (484 aa). C465 lines the heme pocket.

The protein belongs to the cytochrome P450 family. Heme is required as a cofactor.

The protein resides in the membrane. Its subcellular location is the endoplasmic reticulum membrane. The catalysed reaction is dihydromonacolin L carboxylate + reduced [NADPH--hemoprotein reductase] + O2 = monacolin L carboxylate + oxidized [NADPH--hemoprotein reductase] + 2 H2O + H(+). It carries out the reaction monacolin L carboxylate + reduced [NADPH--hemoprotein reductase] + O2 = monacolin J carboxylate + oxidized [NADPH--hemoprotein reductase] + H2O + H(+). The protein operates within polyketide biosynthesis; lovastatin biosynthesis. Its function is as follows. Dihydromonacolin L monooxygenase; part of the gene cluster that mediates the biosynthesis of lovastatin (also known as mevinolin, mevacor or monacolin K), a hypolipidemic inhibitor of (3S)-hydroxymethylglutaryl-coenzyme A (HMG-CoA) reductase (HMGR). The first step in the biosynthesis of lovastatin is the production of dihydromonacolin L acid by the lovastatin nonaketide synthase lovB and the trans-acting enoyl reductase lovC via condensation of one acetyl-CoA unit and 8 malonyl-CoA units. Dihydromonacolin L acid is released from lovB by the thioesterase lovG. Next, dihydromonacolin L acid is oxidized by the dihydromonacolin L monooxygenase lovA twice to form monacolin J acid. The 2-methylbutyrate moiety of lovastatin is synthesized by the lovastatin diketide synthase lovF via condensation of one acetyl-CoA unit and one malonyl-CoA unit. Finally, the covalent attachment of this moiety to monacolin J acid is catalyzed by the transesterase lovD to yield lovastatin. LovD has broad substrate specificity and can also convert monacolin J to simvastatin using alpha-dimethylbutanoyl-S-methyl-3-mercaptopropionate (DMB-S-MMP) as the thioester acyl donor, and can also catalyze the reverse reaction and function as hydrolase in vitro. LovD has much higher activity with LovF-bound 2-methylbutanoate than with free diketide substrates. The chain is Dihydromonacolin L monooxygenase LovA from Aspergillus terreus.